The following is a 372-amino-acid chain: DSC E3 ubiquitin ligase complex subunit 2 (372 aa).

The next 5 helical transmembrane spans lie at 26-46 (VVAGVFALKPFFHINFGLHLL), 54-74 (ILLWQFIYWNSTEVFQALFII), 95-115 (YMFILGMFVTPIFSFLYSLLF), 126-146 (TFLIFAILYQYYYIVPSTVFV), and 160-180 (VIPMIGLAFSHFPSTFINAFL). The disordered stretch occupies residues 246 to 314 (TENENQVENP…LPTGPASQLY (69 aa)). The segment covering 249–268 (ENQVENPVSNADANDSPTRQ) has biased composition (polar residues). Ser-264 carries the phosphoserine modification. At Thr-266 the chain carries Phosphothreonine. The segment covering 269-284 (NARATAIASSSNTAAS) has biased composition (low complexity). Positions 286 to 305 (RNRQQISHPPLGRTSSSSVL) are enriched in polar residues. Positions 332 to 368 (EDINTVQTIMQTSRAQAIQALSQTNDVQRAVELLLEQ) constitute a UBA domain.

As to quaternary structure, component of the DSC E3 ubiquitin ligase complex composed of dsc1, dsc2, dsc3 and dsc4.

The protein localises to the golgi apparatus membrane. The catalysed reaction is S-ubiquitinyl-[E2 ubiquitin-conjugating enzyme]-L-cysteine + [acceptor protein]-L-lysine = [E2 ubiquitin-conjugating enzyme]-L-cysteine + N(6)-ubiquitinyl-[acceptor protein]-L-lysine.. Its pathway is protein modification; protein ubiquitination. Functionally, component of the DSC E3 ubiquitin ligase complex which is required for the sre1 transcriptional activator proteolytic cleavage to release the soluble transcription factor from the membrane in low oxygen or sterol conditions. The complex also plays an important role in the multivesicular body (MVB) pathway and functions in a post-endoplasmic reticulum pathway for protein degradation. In Schizosaccharomyces pombe (strain 972 / ATCC 24843) (Fission yeast), this protein is DSC E3 ubiquitin ligase complex subunit 2 (dsc2).